Here is a 141-residue protein sequence, read N- to C-terminus: Drosulfakinins (141 aa).

The N-terminal stretch at 1–31 is a signal peptide; that stretch reads MGLRSCTHLATLFMTLWAVAFCFLVVVPIPA. Positions 32–73 are excised as a propeptide; sequence QTTSLQNAKDDRRLQELESKIGAESDQTNANLVGPSFSRFGD. Residue Phe82 is modified to Phenylalanine amide. A propeptide spanning residues 86–111 is cleaved from the precursor; sequence VPLISRPMIPIELDLLMDNDDERTKA. At Tyr117 the chain carries Sulfotyrosine. Phenylalanine amide is present on Phe122. Tyr134 is subject to Sulfotyrosine. The residue at position 139 (Phe139) is a Phenylalanine amide.

This sequence belongs to the gastrin/cholecystokinin family.

It localises to the secreted. Drosulfakinin-0 (DSK 0) plays diverse biological roles including regulating gut muscle contraction in adults but not in larvae. The protein is Drosulfakinins of Drosophila simulans (Fruit fly).